The following is a 179-amino-acid chain: Large ribosomal subunit protein uL5 (179 aa).

It belongs to the universal ribosomal protein uL5 family. As to quaternary structure, part of the 50S ribosomal subunit; part of the 5S rRNA/L5/L18/L25 subcomplex. Contacts the 5S rRNA and the P site tRNA. Forms a bridge to the 30S subunit in the 70S ribosome.

This is one of the proteins that bind and probably mediate the attachment of the 5S RNA into the large ribosomal subunit, where it forms part of the central protuberance. In the 70S ribosome it contacts protein S13 of the 30S subunit (bridge B1b), connecting the 2 subunits; this bridge is implicated in subunit movement. Contacts the P site tRNA; the 5S rRNA and some of its associated proteins might help stabilize positioning of ribosome-bound tRNAs. This chain is Large ribosomal subunit protein uL5, found in Geobacter sp. (strain M21).